The chain runs to 465 residues: tRNA modification GTPase MnmE (465 aa).

Residues R21, E85, and K124 each coordinate (6S)-5-formyl-5,6,7,8-tetrahydrofolate. The TrmE-type G domain maps to 220 to 387 (GVPVAIIGET…LQQRLVAAAH (168 aa)). N230 serves as a coordination point for K(+). Residues 230–235 (NAGKST), 249–255 (SDIHGTT), and 274–277 (DTAG) contribute to the GTP site. S234 serves as a coordination point for Mg(2+). The K(+) site is built by S249, I251, and T254. A Mg(2+)-binding site is contributed by T255. K465 is a (6S)-5-formyl-5,6,7,8-tetrahydrofolate binding site.

Belongs to the TRAFAC class TrmE-Era-EngA-EngB-Septin-like GTPase superfamily. TrmE GTPase family. As to quaternary structure, homodimer. Heterotetramer of two MnmE and two MnmG subunits. It depends on K(+) as a cofactor.

It is found in the cytoplasm. In terms of biological role, exhibits a very high intrinsic GTPase hydrolysis rate. Involved in the addition of a carboxymethylaminomethyl (cmnm) group at the wobble position (U34) of certain tRNAs, forming tRNA-cmnm(5)s(2)U34. The protein is tRNA modification GTPase MnmE of Bacteroides fragilis (strain YCH46).